Reading from the N-terminus, the 231-residue chain is Orotidine 5'-phosphate decarboxylase (231 aa).

Residues D11, K32, D59–T68, T118, R180, Q189, G209, and R210 each bind substrate. The active-site Proton donor is the K61.

It belongs to the OMP decarboxylase family. Type 1 subfamily. As to quaternary structure, homodimer.

The catalysed reaction is orotidine 5'-phosphate + H(+) = UMP + CO2. Its pathway is pyrimidine metabolism; UMP biosynthesis via de novo pathway; UMP from orotate: step 2/2. Catalyzes the decarboxylation of orotidine 5'-monophosphate (OMP) to uridine 5'-monophosphate (UMP). The sequence is that of Orotidine 5'-phosphate decarboxylase from Synechocystis sp. (strain ATCC 27184 / PCC 6803 / Kazusa).